Here is a 130-residue protein sequence, read N- to C-terminus: Small ribosomal subunit protein uS11 (130 aa).

The protein belongs to the universal ribosomal protein uS11 family. Part of the 30S ribosomal subunit. Interacts with proteins S7 and S18. Binds to IF-3.

Functionally, located on the platform of the 30S subunit, it bridges several disparate RNA helices of the 16S rRNA. Forms part of the Shine-Dalgarno cleft in the 70S ribosome. The sequence is that of Small ribosomal subunit protein uS11 from Shewanella halifaxensis (strain HAW-EB4).